Consider the following 445-residue polypeptide: Phosphoglucosamine mutase (445 aa).

The active-site Phosphoserine intermediate is serine 102. Mg(2+) is bound by residues serine 102, aspartate 240, aspartate 242, and aspartate 244. Phosphoserine is present on serine 102.

This sequence belongs to the phosphohexose mutase family. It depends on Mg(2+) as a cofactor. In terms of processing, activated by phosphorylation.

The catalysed reaction is alpha-D-glucosamine 1-phosphate = D-glucosamine 6-phosphate. Catalyzes the conversion of glucosamine-6-phosphate to glucosamine-1-phosphate. The polypeptide is Phosphoglucosamine mutase (Mycolicibacterium gilvum (strain PYR-GCK) (Mycobacterium gilvum (strain PYR-GCK))).